Consider the following 342-residue polypeptide: S-adenosylmethionine:tRNA ribosyltransferase-isomerase (342 aa).

It belongs to the QueA family. As to quaternary structure, monomer.

The protein resides in the cytoplasm. It carries out the reaction 7-aminomethyl-7-carbaguanosine(34) in tRNA + S-adenosyl-L-methionine = epoxyqueuosine(34) in tRNA + adenine + L-methionine + 2 H(+). It participates in tRNA modification; tRNA-queuosine biosynthesis. Transfers and isomerizes the ribose moiety from AdoMet to the 7-aminomethyl group of 7-deazaguanine (preQ1-tRNA) to give epoxyqueuosine (oQ-tRNA). The sequence is that of S-adenosylmethionine:tRNA ribosyltransferase-isomerase from Listeria monocytogenes serotype 4b (strain F2365).